We begin with the raw amino-acid sequence, 325 residues long: L-lactate dehydrogenase 1 (325 aa).

NAD(+) contacts are provided by residues Val-17, Asp-38, Lys-43, Tyr-68, and 82-83 (GA). Residues Gln-85, Arg-91, and 123–126 (NPVD) contribute to the substrate site. Residues 121 to 123 (AAN) and Ser-146 contribute to the NAD(+) site. Residue 151–154 (DTAR) participates in substrate binding. Positions 156 and 171 each coordinate beta-D-fructose 1,6-bisphosphate. The Proton acceptor role is filled by His-178. Tyr-223 is modified (phosphotyrosine). Thr-232 lines the substrate pocket.

Belongs to the LDH/MDH superfamily. LDH family. As to quaternary structure, homotetramer.

It is found in the cytoplasm. It carries out the reaction (S)-lactate + NAD(+) = pyruvate + NADH + H(+). Its pathway is fermentation; pyruvate fermentation to lactate; (S)-lactate from pyruvate: step 1/1. Allosterically activated by fructose 1,6-bisphosphate (FBP). Its function is as follows. Catalyzes the conversion of lactate to pyruvate. The polypeptide is L-lactate dehydrogenase 1 (Lactococcus lactis subsp. lactis (strain IL1403) (Streptococcus lactis)).